The sequence spans 375 residues: Alcohol dehydrogenase 4, mitochondrial (375 aa).

The transit peptide at 1–27 directs the protein to the mitochondrion; the sequence is MFRLARAQTALANKASVSRSFLRLNSS. C71, H94, C125, C128, C131, C139, and C181 together coordinate Zn(2+). NAD(+) is bound by residues 205 to 211, D229, K234, 296 to 298, and R368; these read GAAGGLG and VGL.

It belongs to the zinc-containing alcohol dehydrogenase family. As to quaternary structure, homotetramer. Zn(2+) serves as cofactor.

Its subcellular location is the mitochondrion matrix. The catalysed reaction is a primary alcohol + NAD(+) = an aldehyde + NADH + H(+). The enzyme catalyses a secondary alcohol + NAD(+) = a ketone + NADH + H(+). The sequence is that of Alcohol dehydrogenase 4, mitochondrial (ADH4) from Kluyveromyces lactis (strain ATCC 8585 / CBS 2359 / DSM 70799 / NBRC 1267 / NRRL Y-1140 / WM37) (Yeast).